Consider the following 449-residue polypeptide: F-box/LRR-repeat protein At3g60040 (449 aa).

An F-box domain is found at 12–64 (RDAISWLPDEVLGKILSLIPTKQAVSTSLLAKKWRTIFRLVDHLELDDSFSLQ). LRR repeat units follow at residues 161–188 (LTLGTQLCLGQLPSYVSLPSLKSLFIDT), 191–215 (FYDIEDLCCVLLAGCPVLEELSVHH), 216–237 (HDFIATPHTISSPTLKRLSVDY), 239–263 (CPDDVDSASHMSFDLPKLVYLEYSH), 287–312 (ERKVLRMDVTDLIIGIRNVQSLHLSP), and 340–365 (KNKRGWRLLANLLKQSTKLETLIVKD).

The chain is F-box/LRR-repeat protein At3g60040 from Arabidopsis thaliana (Mouse-ear cress).